The primary structure comprises 410 residues: Dipeptidase 1 (410 aa).

The signal sequence occupies residues Met1 to Ala16. Zn(2+)-binding residues include His36 and Asp38. 2 N-linked (GlcNAc...) asparagine glycosylation sites follow: Asn57 and Asn62. A disulfide bond links Cys87 and Cys170. Glu141 provides a ligand contact to Zn(2+). Position 168 (His168) interacts with substrate. His214 and His235 together coordinate Zn(2+). The cysteines at positions 242 and 274 are disulfide-linked. Arg246 serves as a coordination point for substrate. Asn279 carries an N-linked (GlcNAc...) asparagine glycan. Asp304 lines the substrate pocket. The GPI-anchor amidated serine moiety is linked to residue Ser384. A propeptide spans Gly385–Leu410 (removed in mature form).

This sequence belongs to the metallo-dependent hydrolases superfamily. Peptidase M19 family. As to quaternary structure, homodimer; disulfide-linked. Requires Zn(2+) as cofactor.

The protein resides in the apical cell membrane. The catalysed reaction is an L-aminoacyl-L-amino acid + H2O = 2 an L-alpha-amino acid. The enzyme catalyses leukotriene D4 + H2O = leukotriene E4 + glycine. It carries out the reaction L-cystine-bis-glycine + 2 H2O = L-cystine + 2 glycine. It catalyses the reaction a beta-lactam + H2O = a substituted beta-amino acid. The catalysed reaction is glycyldehydrophenylalanine + H2O = 2,3-didehydrophenylalanine + glycine. With respect to regulation, inhibited by L-penicillamine. Inhibited by cilastatin. In terms of biological role, hydrolyzes a wide range of dipeptides including the conversion of leukotriene D4 to leukotriene E4. Hydrolyzes cystinyl-bis-glycine (cys-bis-gly) formed during glutathione degradation. Also possesses beta lactamase activity and hydrolytically inactivates beta-lactam antibiotics. Its function is as follows. Independently of its dipeptidase activity, acts as an adhesion receptor for neutrophil recruitment from bloodstream into inflamed lungs and liver. The polypeptide is Dipeptidase 1 (DPEP1) (Bos taurus (Bovine)).